A 1279-amino-acid polypeptide reads, in one-letter code: Myosin-1 (1279 aa).

A compositionally biased stretch (basic residues) spans methionine 1–alanine 12. Residues methionine 1–leucine 25 form a disordered region. The Myosin motor domain occupies valine 48–aspartate 736. Glycine 141 to threonine 148 lines the ATP pocket. The residue at position 371 (serine 371) is a Phosphoserine. Positions serine 419 to serine 502 are actin-binding. IQ domains are found at residues histidine 740 to alanine 760 and alanine 761 to serine 786. In terms of domain architecture, TH1 spans arginine 794–leucine 984. Polar residues-rich tracts occupy residues valine 980–lysine 989 and alanine 1018–tyrosine 1027. Disordered regions lie at residues valine 980–valine 1001, leucine 1014–proline 1132, serine 1189–threonine 1216, and leucine 1253–tryptophan 1279. Composition is skewed to low complexity over residues threonine 1038–threonine 1056 and serine 1067–alanine 1095. The segment covering alanine 1116 to leucine 1126 has biased composition (pro residues). In terms of domain architecture, SH3 spans proline 1129–serine 1189. Positions serine 1189–valine 1209 are enriched in polar residues. Residues serine 1268–tryptophan 1279 are compositionally biased toward acidic residues.

The protein belongs to the TRAFAC class myosin-kinesin ATPase superfamily. Myosin family. Post-translationally, phosphorylation of the TEDS site (Ser-371) is required for the polarization of the actin cytoskeleton. Phosphorylation probably activates the myosin-I ATPase activity.

It is found in the cytoplasm. The protein resides in the cytoskeleton. Its subcellular location is the actin patch. Its function is as follows. Type-I myosin implicated in the organization of the actin cytoskeleton. Required for proper actin cytoskeleton polarization. At the cell cortex, assembles in patch-like structures together with proteins from the actin-polymerizing machinery and promotes actin assembly. Functions as actin nucleation-promoting factor (NPF) for the Arp2/3 complex. In Lodderomyces elongisporus (strain ATCC 11503 / CBS 2605 / JCM 1781 / NBRC 1676 / NRRL YB-4239) (Yeast), this protein is Myosin-1 (MYO1).